The primary structure comprises 126 residues: MRRAAPAERREYGNAGEEAAVRFLEAQGWRVRDRNWTCRFGELDVVAERDDLVCFVEVRMRSTATWGDPSHSVSFAKQRRVVKAALRYLFAHDLRGRMFRFDVISVVGRGERATVDHIPGAFDAGM.

The protein belongs to the UPF0102 family.

This Myxococcus xanthus (strain DK1622) protein is UPF0102 protein MXAN_3551.